A 156-amino-acid chain; its full sequence is Small ribosomal subunit protein uS7 (156 aa).

This sequence belongs to the universal ribosomal protein uS7 family. As to quaternary structure, part of the 30S ribosomal subunit. Contacts proteins S9 and S11.

One of the primary rRNA binding proteins, it binds directly to 16S rRNA where it nucleates assembly of the head domain of the 30S subunit. Is located at the subunit interface close to the decoding center, probably blocks exit of the E-site tRNA. This Citrobacter koseri (strain ATCC BAA-895 / CDC 4225-83 / SGSC4696) protein is Small ribosomal subunit protein uS7.